A 177-amino-acid polypeptide reads, in one-letter code: Large ribosomal subunit protein uL5c (177 aa).

The protein belongs to the universal ribosomal protein uL5 family. As to quaternary structure, part of the 50S ribosomal subunit; contacts the 5S rRNA.

The protein localises to the plastid. It is found in the chloroplast. Binds 5S rRNA, forms part of the central protuberance of the 50S subunit. The polypeptide is Large ribosomal subunit protein uL5c (rpl5) (Cyanidioschyzon merolae (strain NIES-3377 / 10D) (Unicellular red alga)).